Consider the following 44-residue polypeptide: Thymosin beta-4 (44 aa).

The tract at residues 1–44 (MSDKPDMGEIQKFNKSKLKKTETQEKNPLPSKETIEQEKQAGES) is disordered. Ser2 is subject to N-acetylserine. Ser2 carries the phosphoserine modification. The residue at position 4 (Lys4) is an N6-acetyllysine. Lys12 bears the N6-acetyllysine; alternate mark. Lys12 participates in a covalent cross-link: Glycyl lysine isopeptide (Lys-Gly) (interchain with G-Cter in SUMO2); alternate. Thr23 carries the post-translational modification Phosphothreonine. Lys26 is subject to N6-acetyllysine. The residue at position 31 (Ser31) is a Phosphoserine. At Lys32 the chain carries N6-acetyllysine. The segment covering 33–44 (ETIEQEKQAGES) has biased composition (basic and acidic residues). Thr34 bears the Phosphothreonine mark. Lys39 bears the N6-acetyllysine mark.

It belongs to the thymosin beta family. As to quaternary structure, identified in a complex composed of ACTA1, COBL, GSN AND TMSB4X. Interacts with SERPINB1. Post-translationally, acSDKP is inactivated by ACE, which removes the dipeptide Lys-Pro from its C-terminus.

Its subcellular location is the cytoplasm. The protein resides in the cytoskeleton. Functionally, plays an important role in the organization of the cytoskeleton. Binds to and sequesters actin monomers (G actin) and therefore inhibits actin polymerization. In terms of biological role, potent inhibitor of bone marrow derived stem cell differentiation. Acts by inhibits the entry of hematopoietic pluripotent stem cells into the S-phase. This Notamacropus eugenii (Tammar wallaby) protein is Thymosin beta-4 (TMSB4).